A 141-amino-acid polypeptide reads, in one-letter code: Large ribosomal subunit protein uL11 (141 aa).

This sequence belongs to the universal ribosomal protein uL11 family. In terms of assembly, part of the ribosomal stalk of the 50S ribosomal subunit. Interacts with L10 and the large rRNA to form the base of the stalk. L10 forms an elongated spine to which L12 dimers bind in a sequential fashion forming a multimeric L10(L12)X complex. Post-translationally, one or more lysine residues are methylated.

Its function is as follows. Forms part of the ribosomal stalk which helps the ribosome interact with GTP-bound translation factors. This Pelodictyon phaeoclathratiforme (strain DSM 5477 / BU-1) protein is Large ribosomal subunit protein uL11.